The following is a 434-amino-acid chain: UDP-N-acetylglucosamine 1-carboxyvinyltransferase (434 aa).

22–23 (KN) contacts phosphoenolpyruvate. Arg93 is a UDP-N-acetyl-alpha-D-glucosamine binding site. Residue Cys117 is the Proton donor of the active site. 2-(S-cysteinyl)pyruvic acid O-phosphothioketal is present on Cys117. The UDP-N-acetyl-alpha-D-glucosamine site is built by Asp307 and Val329.

It belongs to the EPSP synthase family. MurA subfamily.

It localises to the cytoplasm. It carries out the reaction phosphoenolpyruvate + UDP-N-acetyl-alpha-D-glucosamine = UDP-N-acetyl-3-O-(1-carboxyvinyl)-alpha-D-glucosamine + phosphate. It functions in the pathway cell wall biogenesis; peptidoglycan biosynthesis. Its function is as follows. Cell wall formation. Adds enolpyruvyl to UDP-N-acetylglucosamine. This chain is UDP-N-acetylglucosamine 1-carboxyvinyltransferase, found in Coxiella burnetii (strain CbuG_Q212) (Coxiella burnetii (strain Q212)).